Reading from the N-terminus, the 225-residue chain is Triosephosphate isomerase (225 aa).

Substrate is bound at residue 9–11; it reads NMK. Catalysis depends on H93, which acts as the Electrophile. The Proton acceptor role is filled by E141. Substrate is bound by residues I146, G181, and 202–203; that span reads AS.

This sequence belongs to the triosephosphate isomerase family. Homotetramer; dimer of dimers.

The protein resides in the cytoplasm. The catalysed reaction is D-glyceraldehyde 3-phosphate = dihydroxyacetone phosphate. The protein operates within carbohydrate biosynthesis; gluconeogenesis. It participates in carbohydrate degradation; glycolysis; D-glyceraldehyde 3-phosphate from glycerone phosphate: step 1/1. Its function is as follows. Involved in the gluconeogenesis. Catalyzes stereospecifically the conversion of dihydroxyacetone phosphate (DHAP) to D-glyceraldehyde-3-phosphate (G3P). The sequence is that of Triosephosphate isomerase from Caldivirga maquilingensis (strain ATCC 700844 / DSM 13496 / JCM 10307 / IC-167).